A 132-amino-acid polypeptide reads, in one-letter code: Small ribosomal subunit protein uS8 (132 aa).

Belongs to the universal ribosomal protein uS8 family. Part of the 30S ribosomal subunit. Contacts proteins S5 and S12.

Functionally, one of the primary rRNA binding proteins, it binds directly to 16S rRNA central domain where it helps coordinate assembly of the platform of the 30S subunit. This chain is Small ribosomal subunit protein uS8, found in Streptococcus pneumoniae serotype 19F (strain G54).